The following is a 94-amino-acid chain: Co-chaperonin GroES (94 aa).

It belongs to the GroES chaperonin family. As to quaternary structure, heptamer of 7 subunits arranged in a ring. Interacts with the chaperonin GroEL.

It localises to the cytoplasm. In terms of biological role, together with the chaperonin GroEL, plays an essential role in assisting protein folding. The GroEL-GroES system forms a nano-cage that allows encapsulation of the non-native substrate proteins and provides a physical environment optimized to promote and accelerate protein folding. GroES binds to the apical surface of the GroEL ring, thereby capping the opening of the GroEL channel. In Pediococcus pentosaceus (strain ATCC 25745 / CCUG 21536 / LMG 10740 / 183-1w), this protein is Co-chaperonin GroES.